The primary structure comprises 309 residues: Porphobilinogen deaminase (309 aa).

An S-(dipyrrolylmethanemethyl)cysteine modification is found at C244.

This sequence belongs to the HMBS family. In terms of assembly, monomer. It depends on dipyrromethane as a cofactor.

The catalysed reaction is 4 porphobilinogen + H2O = hydroxymethylbilane + 4 NH4(+). The protein operates within porphyrin-containing compound metabolism; protoporphyrin-IX biosynthesis; coproporphyrinogen-III from 5-aminolevulinate: step 2/4. Its function is as follows. Tetrapolymerization of the monopyrrole PBG into the hydroxymethylbilane pre-uroporphyrinogen in several discrete steps. The protein is Porphobilinogen deaminase of Listeria innocua serovar 6a (strain ATCC BAA-680 / CLIP 11262).